We begin with the raw amino-acid sequence, 92 residues long: PqqA binding protein (92 aa).

Belongs to the PqqD family. In terms of assembly, monomer. Interacts with PqqE.

It functions in the pathway cofactor biosynthesis; pyrroloquinoline quinone biosynthesis. Functions as a PqqA binding protein and presents PqqA to PqqE, in the pyrroloquinoline quinone (PQQ) biosynthetic pathway. The polypeptide is PqqA binding protein (Xanthomonas campestris pv. campestris (strain B100)).